Consider the following 332-residue polypeptide: MSLSLNDIKFPMHWNLDPNEFSYVEYVYREGLELGVWRPDNKRDQMAHTNVVSLSRYFWPNVDFDRLVMGGELMLWFFTFDDGLDAGIYDDQKSLELVRRMDIVFMDGILPEDPTGPEKVALRLRNKCLAMCGRRKDTFNRFITSCVQWVDSIIPFNKVKVGGQSPHIELYSFLRKINIGAYPCVTLTEVMLNHHLESYIWADPRWIKMNEDIAIVVTLINDLVSYEKEVNDNAGDLNPLFFFQRQNNVDLCDSYKQMVTLIDYYVDHYVQLEQGFLRTLAKYHNPLQEQEVNFMLDHLHYLITGSRMWSMQTPRYCSPTSPFIEMRKFREA.

The short motif at 81-86 (DDGLDA) is the DDxx(x)D/E motif element. The short motif at 221 to 229 (NDLVSYEKE) is the NDxxSxxxD/E motif element.

The protein belongs to the terpene synthase family.

The catalysed reaction is (2E,6E)-farnesyl diphosphate = (2S,3R,6S,9S)-(-)-protoillud-7-ene + diphosphate. Terpene synthase that converts its substrate farnesyl diphosphate (FPP) into the sesquiterpene protoillud-7-ene. This chain is Terpene synthase 1, found in Acytostelium subglobosum (Slime mold).